A 330-amino-acid chain; its full sequence is DNA primase small subunit PriS (330 aa).

Active-site residues include Asp-101 and Asp-103. Residues Cys-116, Cys-119, Cys-128, and Asp-131 each contribute to the Zn(2+) site. Asp-235 is a catalytic residue.

This sequence belongs to the eukaryotic-type primase small subunit family. As to quaternary structure, heterodimer of a small subunit (PriS) and a large subunit (PriL). Mg(2+) is required as a cofactor. Mn(2+) serves as cofactor.

Its function is as follows. Catalytic subunit of DNA primase, an RNA polymerase that catalyzes the synthesis of short RNA molecules used as primers for DNA polymerase during DNA replication. The small subunit contains the primase catalytic core and has DNA synthesis activity on its own. Binding to the large subunit stabilizes and modulates the activity, increasing the rate of DNA synthesis while decreasing the length of the DNA fragments, and conferring RNA synthesis capability. The DNA polymerase activity may enable DNA primase to also catalyze primer extension after primer synthesis. May also play a role in DNA repair. Possesses a template-independent 3'-terminal nucleotidyl transferase activity. The polypeptide is DNA primase small subunit PriS (Saccharolobus solfataricus (strain ATCC 35092 / DSM 1617 / JCM 11322 / P2) (Sulfolobus solfataricus)).